A 180-amino-acid polypeptide reads, in one-letter code: 5'(3')-deoxyribonucleotidase (180 aa).

Residue Asp-9 is the Nucleophile of the active site. Mg(2+)-binding residues include Asp-9, Asp-11, and Asp-134. The active-site Proton donor is Asp-11.

This sequence belongs to the 5'(3')-deoxyribonucleotidase family. The cofactor is Mg(2+).

Its function is as follows. Dephosphorylates nucleoside monophosphates such as the 5' and 2'(3')-phosphates of deoxyribonucleotides in vitro. This chain is 5'(3')-deoxyribonucleotidase, found in Clostridium acetobutylicum (strain ATCC 824 / DSM 792 / JCM 1419 / IAM 19013 / LMG 5710 / NBRC 13948 / NRRL B-527 / VKM B-1787 / 2291 / W).